Consider the following 924-residue polypeptide: DNA repair and recombination protein RDH54 (924 aa).

Over residues 1–10 (MQIPKYENKP) the composition is skewed to basic and acidic residues. Disordered regions lie at residues 1–21 (MQIPKYENKPFKPPRRVGSNK) and 155–183 (EALSQNMGNPNPPTTSTTETVPSTKNDGG). The span at 168-178 (TTSTTETVPST) shows a compositional bias: low complexity. Positions 299-487 (LENDSDISGC…FTIIDFINPG (189 aa)) constitute a Helicase ATP-binding domain. 346–353 (IPLTGLCK) contributes to the ATP binding site. A DEGH box motif is present at residues 472-475 (NDLN). Lys-615 participates in a covalent cross-link: Glycyl lysine isopeptide (Lys-Gly) (interchain with G-Cter in ubiquitin). Residues 631-790 (KLRVLMTLLE…DSEMRNKESS (160 aa)) enclose the Helicase C-terminal domain.

The protein belongs to the SNF2/RAD54 helicase family. As to quaternary structure, interacts with RAD51 and DMC1.

Its subcellular location is the nucleus. It catalyses the reaction ATP + H2O = ADP + phosphate + H(+). In terms of biological role, involved in the recombinational repair of double-strand breaks (DSB) in DNA during mitosis and meiosis. Has DNA dependent ATPase activity. Promotes D-loop (displacement loop) formation with RAD51 recombinase. Modifies the topology of double-stranded DNA during the D-loop reaction to facilitate the invasion of the homologous duplex molecule by the initiating single-stranded DNA substrate. Required for adaptation from G2/M checkpoint arrest induced by a double strand break, by participating in monitoring the extent of single-stranded DNA produced by resection of DNA ends. This role is distinct from its roles in recombination. Promotes colocalization of RAD51 and DMC1 during meiotic recombination. Involved in crossover interference. The protein is DNA repair and recombination protein RDH54 (RDH54) of Saccharomyces cerevisiae (strain RM11-1a) (Baker's yeast).